Reading from the N-terminus, the 499-residue chain is Pyruvate kinase 1 (499 aa).

Arg-50 provides a ligand contact to substrate. K(+) contacts are provided by Asn-52, Ser-54, Asp-84, and Thr-85. Asn-52–His-55 is an ATP binding site. Residue Arg-91 participates in ATP binding. Residue Glu-241 coordinates Mg(2+). Substrate contacts are provided by Gly-264, Asp-265, and Thr-297. Residue Asp-265 participates in Mg(2+) binding.

Belongs to the pyruvate kinase family. Homotetramer. Requires Mg(2+) as cofactor. K(+) serves as cofactor.

The catalysed reaction is pyruvate + ATP = phosphoenolpyruvate + ADP + H(+). The protein operates within carbohydrate degradation; glycolysis; pyruvate from D-glyceraldehyde 3-phosphate: step 5/5. Activated by fructose 2,6-bisphosphate, activated by the effector in a cooperative manner. This is Pyruvate kinase 1 (PYK1) from Trypanosoma brucei brucei.